A 138-amino-acid chain; its full sequence is uncharacterized protein (138 aa).

This is an uncharacterized protein from Caenorhabditis elegans.